We begin with the raw amino-acid sequence, 387 residues long: MEQVVIVDAIRTPMGRSKGGAFRNVRAEDLSAHLMRSLLARNPALEAAALDDIYWGCVQQTLEQGFNIARNAALLAEVPHSVPAVTVNRLCGSSMQALHDAARMIMTGDAQACLVGGVEHMGHVPMSHGVDFHPGLSRNVAKAAGMMGLTAEMLARMHGISREMQDAFAARSHARAWAATQSGAFKNEIIPTGGHDADGVLKQFNYDEVIRPETTVEALATLRPAFDPVSGTVTAGTSSALSDGAAAMLVMSESRARDLGLKPRACVRSMAVVGCDPSIMGYGPVPASKLALKKAGLSASDIGVFEMNEAFAAQILPCIKDLGLMEQIDEKINLNGGAIALGHPLGCSGARISTTLLNLMEHKDVQFGLATMCIGLGQGIATVFERV.

Residue Cys91 is the Acyl-thioester intermediate of the active site. Residues His343 and Cys373 each act as proton acceptor in the active site.

This sequence belongs to the thiolase-like superfamily. Thiolase family. As to quaternary structure, heterotetramer of two alpha chains (FadB) and two beta chains (FadA).

The protein resides in the cytoplasm. It catalyses the reaction an acyl-CoA + acetyl-CoA = a 3-oxoacyl-CoA + CoA. Its pathway is lipid metabolism; fatty acid beta-oxidation. Functionally, catalyzes the final step of fatty acid oxidation in which acetyl-CoA is released and the CoA ester of a fatty acid two carbons shorter is formed. In Escherichia coli O6:K15:H31 (strain 536 / UPEC), this protein is 3-ketoacyl-CoA thiolase.